Here is a 222-residue protein sequence, read N- to C-terminus: 2-C-methyl-D-erythritol 4-phosphate cytidylyltransferase (222 aa).

Belongs to the IspD/TarI cytidylyltransferase family. IspD subfamily.

It catalyses the reaction 2-C-methyl-D-erythritol 4-phosphate + CTP + H(+) = 4-CDP-2-C-methyl-D-erythritol + diphosphate. Its pathway is isoprenoid biosynthesis; isopentenyl diphosphate biosynthesis via DXP pathway; isopentenyl diphosphate from 1-deoxy-D-xylulose 5-phosphate: step 2/6. In terms of biological role, catalyzes the formation of 4-diphosphocytidyl-2-C-methyl-D-erythritol from CTP and 2-C-methyl-D-erythritol 4-phosphate (MEP). This Thermotoga neapolitana (strain ATCC 49049 / DSM 4359 / NBRC 107923 / NS-E) protein is 2-C-methyl-D-erythritol 4-phosphate cytidylyltransferase.